Here is a 456-residue protein sequence, read N- to C-terminus: RUN domain-containing protein 3B (456 aa).

The segment at 1–26 (MASRSLGGLSGIRGGGGGGGKKSLSS) is disordered. Residues 8–21 (GLSGIRGGGGGGGK) are compositionally biased toward gly residues. Arginine 13 carries the omega-N-methylarginine modification. Residues 57 to 189 (DDSSPEFNNF…IDFSFCLKGE (133 aa)) form the RUN domain. Phosphoserine occurs at positions 215 and 216. A coiled-coil region spans residues 300–325 (AHKLEKEQLEYIIVELQDQLTVLKNN). The interval 382–405 (SLSQTSLDPGQSQEGDGKQDTLNI) is disordered.

This sequence belongs to the RUNDC3 family. Interacts with RAP2A.

This Macaca fascicularis (Crab-eating macaque) protein is RUN domain-containing protein 3B (RUNDC3B).